A 146-amino-acid chain; its full sequence is Hemoglobin subunit beta-0 (146 aa).

Residues 2-146 (EWTDFERATI…VVSSLGRQYH (145 aa)) enclose the Globin domain. 2 residues coordinate heme b: His-63 and His-92.

Belongs to the globin family. In terms of assembly, heterotetramer of two alpha chains and two beta chains. In terms of tissue distribution, red blood cells.

Functionally, involved in oxygen transport from gills to the various peripheral tissues. In Pagothenia borchgrevinki (Bald rockcod), this protein is Hemoglobin subunit beta-0 (hbb0).